We begin with the raw amino-acid sequence, 702 residues long: Elongation factor G (702 aa).

A tr-type G domain is found at 8 to 290; the sequence is ERYRNIGISA…AVIDYLPSPV (283 aa). GTP-binding positions include 17-24, 88-92, and 142-145; these read AHIDAGKT, DTPGH, and NKMD.

This sequence belongs to the TRAFAC class translation factor GTPase superfamily. Classic translation factor GTPase family. EF-G/EF-2 subfamily.

Its subcellular location is the cytoplasm. Catalyzes the GTP-dependent ribosomal translocation step during translation elongation. During this step, the ribosome changes from the pre-translocational (PRE) to the post-translocational (POST) state as the newly formed A-site-bound peptidyl-tRNA and P-site-bound deacylated tRNA move to the P and E sites, respectively. Catalyzes the coordinated movement of the two tRNA molecules, the mRNA and conformational changes in the ribosome. This Acidovorax ebreus (strain TPSY) (Diaphorobacter sp. (strain TPSY)) protein is Elongation factor G.